Reading from the N-terminus, the 433-residue chain is SPI-2 type 3 secretion system ATPase (433 aa).

Position 165-170 (165-170) interacts with ATP; the sequence is GVGKST.

The protein belongs to the ATPase alpha/beta chains family. T3SS ATPase subfamily. In terms of assembly, the core secretion machinery of the T3SS is composed of approximately 20 different proteins, including cytoplasmic components, a base, an export apparatus and a needle. This subunit is part of the cytosolic complex. Forms homohexamers. Forms a complex with SsaK/SctL (stator protein) and SsaQ/SctQ (the major sorting platform component). Interacts with the T3SS-2 specific chaperones SsaE, SseA, SscA, SscB, and SrcA.

It localises to the cytoplasm. It carries out the reaction ATP + H2O + cellular proteinSide 1 = ADP + phosphate + cellular proteinSide 2.. Functionally, ATPase component of the type III secretion system (T3SS), also called injectisome, which is used to inject bacterial effector proteins into eukaryotic host cells. Acts as a molecular motor to provide the energy that is required for the export of proteins. Required for type III secretion apparatus (T3SA) formation, secretion of a subset of SPI-2 effectors and virulence. May play a critical role in T3SS substrate recognition, disassembly of the effector/chaperone complex and unfolding of the effector in an ATP-dependent manner prior to secretion. Releases the effector protein SseB from the T3SS-2 specific chaperone SsaE in an ATP-dependent manner. The protein is SPI-2 type 3 secretion system ATPase of Salmonella typhimurium (strain LT2 / SGSC1412 / ATCC 700720).